The primary structure comprises 320 residues: Phospho-N-acetylmuramoyl-pentapeptide-transferase (320 aa).

A run of 10 helical transmembrane segments spans residues phenylalanine 6–glycine 26, methionine 54–leucine 74, leucine 81–isoleucine 101, leucine 117–serine 137, isoleucine 145–phenylalanine 165, isoleucine 175–phenylalanine 195, isoleucine 200–asparagine 220, isoleucine 226–leucine 246, phenylalanine 251–valine 271, and arginine 300–phenylalanine 320.

It belongs to the glycosyltransferase 4 family. MraY subfamily. The cofactor is Mg(2+).

Its subcellular location is the cell membrane. It carries out the reaction UDP-N-acetyl-alpha-D-muramoyl-L-alanyl-gamma-D-glutamyl-L-lysyl-D-alanyl-D-alanine + di-trans,octa-cis-undecaprenyl phosphate = Mur2Ac(oyl-L-Ala-gamma-D-Glu-L-Lys-D-Ala-D-Ala)-di-trans,octa-cis-undecaprenyl diphosphate + UMP. The protein operates within cell wall biogenesis; peptidoglycan biosynthesis. Functionally, catalyzes the initial step of the lipid cycle reactions in the biosynthesis of the cell wall peptidoglycan: transfers peptidoglycan precursor phospho-MurNAc-pentapeptide from UDP-MurNAc-pentapeptide onto the lipid carrier undecaprenyl phosphate, yielding undecaprenyl-pyrophosphoryl-MurNAc-pentapeptide, known as lipid I. This Latilactobacillus sakei subsp. sakei (strain 23K) (Lactobacillus sakei subsp. sakei) protein is Phospho-N-acetylmuramoyl-pentapeptide-transferase.